A 181-amino-acid polypeptide reads, in one-letter code: Adenine phosphoribosyltransferase (181 aa).

This sequence belongs to the purine/pyrimidine phosphoribosyltransferase family. In terms of assembly, homodimer.

The protein localises to the cytoplasm. The catalysed reaction is AMP + diphosphate = 5-phospho-alpha-D-ribose 1-diphosphate + adenine. It functions in the pathway purine metabolism; AMP biosynthesis via salvage pathway; AMP from adenine: step 1/1. Its function is as follows. Catalyzes a salvage reaction resulting in the formation of AMP, that is energically less costly than de novo synthesis. The sequence is that of Adenine phosphoribosyltransferase (Aprt) from Drosophila pseudoobscura pseudoobscura (Fruit fly).